A 103-amino-acid polypeptide reads, in one-letter code: Large ribosomal subunit protein uL24 (103 aa).

This sequence belongs to the universal ribosomal protein uL24 family. Part of the 50S ribosomal subunit.

In terms of biological role, one of two assembly initiator proteins, it binds directly to the 5'-end of the 23S rRNA, where it nucleates assembly of the 50S subunit. Its function is as follows. One of the proteins that surrounds the polypeptide exit tunnel on the outside of the subunit. The polypeptide is Large ribosomal subunit protein uL24 (Ruegeria pomeroyi (strain ATCC 700808 / DSM 15171 / DSS-3) (Silicibacter pomeroyi)).